The sequence spans 296 residues: MVRVLSAGHVNWDVTLRVDRLPEADGEASIRSQRQSGGGSAANVAAALAGLEVDAGLIGSVGDDDNGVLARRDLESAGVDLEGVRIVEAGQTAVKYLLVDDDGEVAVLGNDGVNEAVGPEEIDERRIRNADHVHLTSQRPDTAAAIARTANEAGVTVSFDPGRRLGDRDYGEALAAADVLFANDRELAALLEDEYEYVGSDFDDRIVAVKHGSDGAEVHTPTGSYVHPGFDVDAVDTAGAGDAFAAGFIATWLTDGDVERALEYANACGALTAGREGARSAPTADAVAAFLSERFD.

The Proton acceptor role is filled by D242.

Belongs to the carbohydrate kinase PfkB family. Requires Mg(2+) as cofactor.

It carries out the reaction alpha-D-ribose 1-phosphate + ATP = alpha-D-ribose 1,5-bisphosphate + ADP + H(+). With respect to regulation, requires salt for kinase activity. 2.0 M is the optimal KCl concentration. Functionally, kinase involved in the non-carboxylating pentose bisphosphate pathway, a nucleoside degradation pathway present in some halophilic archaea. Catalyzes the ATP-dependent phosphorylation of ribose 1-phosphate (R1P) to ribose 1,5-bisphosphate (R15P). Shows weak activity towards various other phosphate acceptors, such as xylulose, 2'-deoxyguanosine and D-ribulose. ATP is the most preferred phosphate donor, followed by CTP and GTP. This chain is ATP-dependent ribose-1-phosphate kinase, found in Halopiger xanaduensis (strain DSM 18323 / JCM 14033 / SH-6).